The primary structure comprises 193 residues: dCTP deaminase, dUMP-forming (193 aa).

DCTP-binding positions include 101–106 (KSSLGR), Asp119, 127–129 (TLE), Gln148, Tyr162, and Gln174. Glu129 acts as the Proton donor/acceptor in catalysis. A disordered region spans residues 162-184 (YGSKGTGSHYQGQRGPTPSRSYE). Residues 167–183 (TGSHYQGQRGPTPSRSY) show a composition bias toward polar residues.

Belongs to the dCTP deaminase family. As to quaternary structure, homotrimer.

It catalyses the reaction dCTP + 2 H2O = dUMP + NH4(+) + diphosphate. It functions in the pathway pyrimidine metabolism; dUMP biosynthesis; dUMP from dCTP: step 1/1. In terms of biological role, bifunctional enzyme that catalyzes both the deamination of dCTP to dUTP and the hydrolysis of dUTP to dUMP without releasing the toxic dUTP intermediate. This Bifidobacterium longum (strain DJO10A) protein is dCTP deaminase, dUMP-forming.